An 80-amino-acid polypeptide reads, in one-letter code: UPF0512 protein Q (80 aa).

This sequence belongs to the UPF0512 family.

The chain is UPF0512 protein Q from Dictyostelium discoideum (Social amoeba).